A 171-amino-acid polypeptide reads, in one-letter code: MTRQNAYSRDQLLASARGELFGPNSGRLPNDPMLMFDRITEINDNGGSHGKGLIRAELDIRPDLWFFNCHFIGDPVMPGCLGLDAMWQLTGFFLTWIGAPGRGRALGCGEVKFTGQVLPTATLVTYEIEISRVINRKLVMAQSDARMLVDGREIYAAKDLRVGMFTSTENF.

Residue His-70 is part of the active site.

This sequence belongs to the thioester dehydratase family. FabA subfamily. Homodimer.

It localises to the cytoplasm. The enzyme catalyses a (3R)-hydroxyacyl-[ACP] = a (2E)-enoyl-[ACP] + H2O. It carries out the reaction (3R)-hydroxydecanoyl-[ACP] = (2E)-decenoyl-[ACP] + H2O. It catalyses the reaction (2E)-decenoyl-[ACP] = (3Z)-decenoyl-[ACP]. It functions in the pathway lipid metabolism; fatty acid biosynthesis. Necessary for the introduction of cis unsaturation into fatty acids. Catalyzes the dehydration of (3R)-3-hydroxydecanoyl-ACP to E-(2)-decenoyl-ACP and then its isomerization to Z-(3)-decenoyl-ACP. Can catalyze the dehydratase reaction for beta-hydroxyacyl-ACPs with saturated chain lengths up to 16:0, being most active on intermediate chain length. In Xanthomonas campestris pv. campestris (strain 8004), this protein is 3-hydroxydecanoyl-[acyl-carrier-protein] dehydratase.